A 634-amino-acid polypeptide reads, in one-letter code: DNA mismatch repair protein MutL (634 aa).

A disordered region spans residues 406 to 427; that stretch reads HTHHNDTKGSVHTKSFSARSSS.

The protein belongs to the DNA mismatch repair MutL/HexB family.

Its function is as follows. This protein is involved in the repair of mismatches in DNA. It is required for dam-dependent methyl-directed DNA mismatch repair. May act as a 'molecular matchmaker', a protein that promotes the formation of a stable complex between two or more DNA-binding proteins in an ATP-dependent manner without itself being part of a final effector complex. In Anaplasma phagocytophilum (strain HZ), this protein is DNA mismatch repair protein MutL.